The sequence spans 718 residues: MAEAEGESLESWLNKATNPSNRQEDWEYIIGFCDQINKELEGPQIAVRLLAHKIQSPQEWEAVQALTVLEACMKNCGRRLHNEVGKFRFLNELIKVVSPKYLGDRVSEKVKTKVIELLFSWTLALPEEAKIKDAYHMLKRQGIVQSDPPIPMDRTLIPSPPPRPKNPVFDDEEKSKLLARLLKSKNPDDLQEANRLIKSMVKEDEARIQKVTKRLHTLEEVNNNVKLLHEMLLHYSQEYSSDADKELMKELFDRCENKRRTLFKLASETEDNDNSLGDILQASDNLSRVINSYKTIIEGQIVNGEVTTSTMPDSEGNSHCGNQGALIDLAELDAPSNSSPALAPPTSGIPILPPPPQTSGPPRSRSSSQAEAPPGSDSTNNALSLLDEELLCLGLTDPAPTAPKESPGSSQWHLFQNEPPSDLDFFSPRPVPAASCPSDGPQLPPPVSTSSMSQAPLPAAFPAPVVPASAPTHSTGSFMFSSGPAPALAPKAEPKGPEYPSSSTSHRLDALDQLLEEAKVTSGLVKPVSCFSPGPTASPLLPASAPARPLLPFSTGPGSPLFQSQGSPQKGPELSLASVHVPLESIKPSSALPVTAYDKNGFRILFHFAKECPPGRPDVLVVVVSMLNTAPLPVKSIVLQAAVPKSMKVKLQPPSGTELSPFSPIQPPAAITQVMLLANPMKEKVRLRYKLTFALGEQLSTELGEVDQFPPVEQWGNL.

Residues 16 to 146 (ATNPSNRQED…MLKRQGIVQS (131 aa)) form the VHS domain. A phosphoserine mark is found at S159 and S275. Residues 171–298 (DEEKSKLLAR…VINSYKTIIE (128 aa)) form the GAT domain. Residues 299–588 (GQIVNGEVTT…VHVPLESIKP (290 aa)) are unstructured hinge. Low complexity-rich tracts occupy residues 334–350 (APSNSSPALAPPTSGIP) and 360–369 (GPPRSRSSSQ). The tract at residues 334–381 (APSNSSPALAPPTSGIPILPPPPQTSGPPRSRSSSQAEAPPGSDSTNN) is disordered. Residues 387–391 (DEELL) carry the Autoinhibitory motif. Disordered regions lie at residues 395 to 455 (LTDP…MSQA) and 477 to 506 (SFMFSSGPAPALAPKAEPKGPEYPSSSTSH). Residues 589-710 (SSALPVTAYD…TELGEVDQFP (122 aa)) form the GAE domain.

It belongs to the GGA protein family. Monomer. Interacts with GGA1 and GGA2. Binds to clathrin and activated ARFs, such as ARF1, ARF5 and ARF6. Binds RABEP1 and RABGEF1. Interacts with the membrane proteins M6PR/CD-MPR and IGF2R/CI-MPR and the accessory proteins SYNRG, EPN4, NECAP1, NECAP2 and AFTPH/aftiphilin. Interacts with TSG101 and UBC. Interacts with ADRA2B. Interacts with NTRK1; the interaction is independent of NTRK1 activation and ubiquitination. Interacts (via VHS domain) with BACE1 (via DXXLL motif). In terms of processing, phosphorylated by CK2 and dephosphorylated by PP2A. Phosphorylation of GGA3 allows the internal DXXLL motif to bind the VHS domain and to inhibit the recognition of cargo signals. Ubiquitinated. Post-translationally, proteolytically cleaved during apoptosis by CASP3.

The protein resides in the golgi apparatus. The protein localises to the trans-Golgi network membrane. It localises to the endosome membrane. It is found in the early endosome membrane. Its subcellular location is the recycling endosome membrane. In terms of biological role, plays a role in protein sorting and trafficking between the trans-Golgi network (TGN) and endosomes. Mediates the ARF-dependent recruitment of clathrin to the TGN and binds ubiquitinated proteins and membrane cargo molecules with a cytosolic acidic cluster-dileucine (DXXLL) motif. Functionally, plays a role in protein sorting and trafficking between the trans-Golgi network (TGN) and endosomes. Mediates the ARF-dependent recruitment of clathrin to the TGN and binds ubiquitinated proteins and membrane cargo molecules with a cytosolic acidic cluster-dileucine (DXXLL) motif. Mediates export of the GPCR receptor ADRA2B to the cell surface. Involved in BACE1 transport and sorting as well as regulation of BACE1 protein levels. Regulates retrograde transport of BACE1 from endosomes to the trans-Golgi network via interaction through the VHS motif and dependent of BACE1 phosphorylation. Modulates BACE1 protein levels independently of the interaction between VHS domain and DXXLL motif through recognition of ubiquitination. Key player in a novel DXXLL-mediated endosomal sorting machinery to the recycling pathway that targets NTRK1 to the plasma membrane. This Mus musculus (Mouse) protein is ADP-ribosylation factor-binding protein GGA3 (Gga3).